The chain runs to 29 residues: ELIGAANRDTKSFSINRKDAKERVAKAAR.

Residues 1–29 form a disordered region; the sequence is ELIGAANRDTKSFSINRKDAKERVAKAAR. Over residues 8 to 29 the composition is skewed to basic and acidic residues; sequence RDTKSFSINRKDAKERVAKAAR.

Belongs to the universal ribosomal protein uS7 family. In terms of assembly, part of the 30S ribosomal subunit.

Its function is as follows. One of the primary rRNA binding proteins, it binds directly to 16S rRNA where it nucleates assembly of the head domain of the 30S subunit. Is located at the subunit interface close to the decoding center. This Methanosarcina thermophila protein is Small ribosomal subunit protein uS7 (rps7).